The primary structure comprises 162 residues: Selenoprotein F (162 aa).

A signal peptide spans 1–28 (MAAEPGGWLGPALGLRLLLATALQMVSA). Residue Sec-93 is a non-standard amino acid, selenocysteine.

Belongs to the selenoprotein M/F family. Forms a tight complex with UGGT1/UGCGL1. Interacts with UGGT2/UGCGL2. Interacts with RDH11.

It localises to the endoplasmic reticulum lumen. Its function is as follows. May be involved in redox reactions associated with the formation of disulfide bonds. May contribute to the quality control of protein folding in the endoplasmic reticulum. May regulate protein folding by enhancing the catalytic activity of UGGT1/UGCGL1 and UGGT2/UGCGL2. In Sus scrofa (Pig), this protein is Selenoprotein F.